A 285-amino-acid polypeptide reads, in one-letter code: ATP phosphoribosyltransferase (285 aa).

This sequence belongs to the ATP phosphoribosyltransferase family. Long subfamily. The cofactor is Mg(2+).

The protein resides in the cytoplasm. The enzyme catalyses 1-(5-phospho-beta-D-ribosyl)-ATP + diphosphate = 5-phospho-alpha-D-ribose 1-diphosphate + ATP. It functions in the pathway amino-acid biosynthesis; L-histidine biosynthesis; L-histidine from 5-phospho-alpha-D-ribose 1-diphosphate: step 1/9. With respect to regulation, feedback inhibited by histidine. In terms of biological role, catalyzes the condensation of ATP and 5-phosphoribose 1-diphosphate to form N'-(5'-phosphoribosyl)-ATP (PR-ATP). Has a crucial role in the pathway because the rate of histidine biosynthesis seems to be controlled primarily by regulation of HisG enzymatic activity. The polypeptide is ATP phosphoribosyltransferase (Sulfolobus acidocaldarius (strain ATCC 33909 / DSM 639 / JCM 8929 / NBRC 15157 / NCIMB 11770)).